We begin with the raw amino-acid sequence, 231 residues long: MAHIGKRISKAREGIDRVKLYPIRDAIALIKERASAKFDETVEIAMNLGVDPKHADQMVRGVVNLPNGTGRTLRVAVFARGAKADEATAAGADIVGAEDLVATVQGGTIAFDRCIATPDMMPLVGRLGKVLGPRGLMPNPKVGTVTMDVAAAVKASKGGAVEFRVEKAGIIQGSVGKASFDDDKLAENIAAFVDAVAKAKPQGAKGTYIQRVAISSTMGPGVKVDPATLTA.

It belongs to the universal ribosomal protein uL1 family. Part of the 50S ribosomal subunit.

Its function is as follows. Binds directly to 23S rRNA. The L1 stalk is quite mobile in the ribosome, and is involved in E site tRNA release. Protein L1 is also a translational repressor protein, it controls the translation of the L11 operon by binding to its mRNA. The chain is Large ribosomal subunit protein uL1 from Methylocella silvestris (strain DSM 15510 / CIP 108128 / LMG 27833 / NCIMB 13906 / BL2).